Reading from the N-terminus, the 206-residue chain is Ras-related protein RABG3a (206 aa).

15–22 (GDSGVGKT) serves as a coordination point for GTP. An Effector region motif is present at residues 37–45 (YKATIGADF). GTP-binding positions include 63 to 67 (DTAGQ), 125 to 128 (NKID), and 158 to 159 (SA). 2 S-geranylgeranyl cysteine lipidation sites follow: cysteine 204 and cysteine 206. Residue cysteine 206 is modified to Cysteine methyl ester.

Belongs to the small GTPase superfamily. Rab family.

The protein resides in the cell membrane. In terms of biological role, intracellular vesicle trafficking and protein transport. In Arabidopsis thaliana (Mouse-ear cress), this protein is Ras-related protein RABG3a (RABG3A).